The chain runs to 309 residues: MSQNLESVKNLLVFLGKSLLSVLEALLFHVISKPRKNVAGEIVLITGAGSGLGRLLALQFARLGAVLVLWDVNKEANDETHQLAREAGAARVHAYTCDCSRREEVYRVADQVKKEVGDVSILINNAGIVTGRNFLDCPDDLMEKSFDVNFKAHLWMYKAFLPAMIANNHGHLVCISSSAGLIGVNGLSDYCASKFAALGFAESMFIETLAKKQWGIKTTIVCPFFIKTGMFEGCTTKCPTLLPILDPEYAVRKIIDAILQEQLYLYMPKFLYFIVFLKSILPIKTGILIADYLGVFHMTEGFTGQKKKT.

A helical membrane pass occupies residues 11–31; sequence LLVFLGKSLLSVLEALLFHVI. 44 to 68 contributes to the NADP(+) binding site; sequence LITGAGSGLGRLLALQFARLGAVLV. Residue Ser-177 participates in substrate binding. Residue Tyr-190 is the Proton acceptor of the active site. The helical transmembrane segment at 270-290 threads the bilayer; it reads FLYFIVFLKSILPIKTGILIA.

It belongs to the short-chain dehydrogenases/reductases (SDR) family.

The protein resides in the endoplasmic reticulum membrane. It carries out the reaction all-trans-retinol--[retinol-binding protein] + NAD(+) = all-trans-retinal--[retinol-binding protein] + NADH + H(+). It participates in cofactor metabolism; retinol metabolism. Oxidoreductase with strong preference for NAD. Active in both the oxidative and reductive directions. Oxidizes all-trans-retinol in all-trans-retinaldehyde. No activity was detected with 11-cis-retinol or 11-cis-retinaldehyde as substrates with either NAD(+)/NADH or NADP(+)/NADPH. The protein is Epidermal retinol dehydrogenase 2 of Mus musculus (Mouse).